The sequence spans 679 residues: Glycine--tRNA ligase beta subunit (679 aa).

It belongs to the class-II aminoacyl-tRNA synthetase family. As to quaternary structure, tetramer of two alpha and two beta subunits.

Its subcellular location is the cytoplasm. It catalyses the reaction tRNA(Gly) + glycine + ATP = glycyl-tRNA(Gly) + AMP + diphosphate. In Streptococcus pyogenes serotype M3 (strain ATCC BAA-595 / MGAS315), this protein is Glycine--tRNA ligase beta subunit.